The following is a 341-amino-acid chain: MRLCLIPQNTGTPQRVLPPVVWSPPSRKKPMLSACNSMMFGHLSPVRIPHLRGKFNLQLPSLDEQVIPARLPKMEVRAEEPKEATEVKDQVETQGQEDNKRGPCSNGEAASTSSLLETQGNLTSSWYNPRPLEGNVHLKSLIEKNQTDKAQVHAVSFYSKDHEVASSHSPAGGILSFGKPDPLPTVLPAPVPGCSLWPEKAALKVLGKDHLPSSPGLLMVGEDMQPKDPAALGSSRSSPSRAASHSSHKRKLSEPPLQLQPTPPLQLKWDRDEGPPPAKFPCLSPEALLVSQASQREGRLQQGNMCKNMRVLSRTSKFRRLRELLRRRKKRRQGRCGSSHL.

The span at 75 to 101 (EVRAEEPKEATEVKDQVETQGQEDNKR) shows a compositional bias: basic and acidic residues. Disordered stretches follow at residues 75 to 115 (EVRA…TSSL) and 216 to 278 (GLLM…PPPA). Low complexity predominate over residues 234 to 245 (SSRSSPSRAASH).

The protein belongs to the UPF0607 family.

The sequence is that of Putative UPF0607 protein ENSP00000383783 from Homo sapiens (Human).